The sequence spans 424 residues: Histidinol dehydrogenase (424 aa).

NAD(+)-binding residues include tyrosine 124, glutamine 186, and asparagine 209. The substrate site is built by serine 232, glutamine 254, and histidine 257. Zn(2+) is bound by residues glutamine 254 and histidine 257. Residues glutamate 322 and histidine 323 each act as proton acceptor in the active site. Positions 323, 356, 410, and 415 each coordinate substrate. Aspartate 356 is a binding site for Zn(2+). Position 415 (histidine 415) interacts with Zn(2+).

Belongs to the histidinol dehydrogenase family. The cofactor is Zn(2+).

It carries out the reaction L-histidinol + 2 NAD(+) + H2O = L-histidine + 2 NADH + 3 H(+). It functions in the pathway amino-acid biosynthesis; L-histidine biosynthesis; L-histidine from 5-phospho-alpha-D-ribose 1-diphosphate: step 9/9. Catalyzes the sequential NAD-dependent oxidations of L-histidinol to L-histidinaldehyde and then to L-histidine. This Moorella thermoacetica (strain ATCC 39073 / JCM 9320) protein is Histidinol dehydrogenase.